A 116-amino-acid polypeptide reads, in one-letter code: Ribosome-binding factor A (116 aa).

Belongs to the RbfA family. In terms of assembly, monomer. Binds 30S ribosomal subunits, but not 50S ribosomal subunits or 70S ribosomes.

The protein resides in the cytoplasm. In terms of biological role, one of several proteins that assist in the late maturation steps of the functional core of the 30S ribosomal subunit. Associates with free 30S ribosomal subunits (but not with 30S subunits that are part of 70S ribosomes or polysomes). Required for efficient processing of 16S rRNA. May interact with the 5'-terminal helix region of 16S rRNA. This Pediococcus pentosaceus (strain ATCC 25745 / CCUG 21536 / LMG 10740 / 183-1w) protein is Ribosome-binding factor A.